Here is a 396-residue protein sequence, read N- to C-terminus: 1-deoxy-D-xylulose 5-phosphate reductoisomerase (396 aa).

Thr-10, Gly-11, Ser-12, Ile-13, Gln-38, and Asn-124 together coordinate NADPH. Position 125 (Lys-125) interacts with 1-deoxy-D-xylulose 5-phosphate. Residue Glu-126 coordinates NADPH. Asp-150 is a Mn(2+) binding site. Positions 151, 152, 179, and 202 each coordinate 1-deoxy-D-xylulose 5-phosphate. Glu-152 is a binding site for Mn(2+). Gly-208 lines the NADPH pocket. Ser-215, Asn-220, Lys-221, and Glu-224 together coordinate 1-deoxy-D-xylulose 5-phosphate. Glu-224 provides a ligand contact to Mn(2+).

It belongs to the DXR family. It depends on Mg(2+) as a cofactor. Requires Mn(2+) as cofactor.

It catalyses the reaction 2-C-methyl-D-erythritol 4-phosphate + NADP(+) = 1-deoxy-D-xylulose 5-phosphate + NADPH + H(+). It functions in the pathway isoprenoid biosynthesis; isopentenyl diphosphate biosynthesis via DXP pathway; isopentenyl diphosphate from 1-deoxy-D-xylulose 5-phosphate: step 1/6. In terms of biological role, catalyzes the NADPH-dependent rearrangement and reduction of 1-deoxy-D-xylulose-5-phosphate (DXP) to 2-C-methyl-D-erythritol 4-phosphate (MEP). The protein is 1-deoxy-D-xylulose 5-phosphate reductoisomerase of Ralstonia pickettii (strain 12J).